A 299-amino-acid chain; its full sequence is Sulfate adenylyltransferase subunit 2 (299 aa).

It belongs to the PAPS reductase family. CysD subfamily. In terms of assembly, sulfate-activating enzymes, NodP and NodQ, may be physically associated.

The enzyme catalyses sulfate + ATP + H(+) = adenosine 5'-phosphosulfate + diphosphate. Proposed to provide activated sulfate for transfer to nod factor. The protein is Sulfate adenylyltransferase subunit 2 (nodP) of Rhizobium meliloti (strain 1021) (Ensifer meliloti).